We begin with the raw amino-acid sequence, 400 residues long: Dehydrogenase efuE (400 aa).

Residues 222-223 (AI), 303-305 (TAR), and aspartate 329 contribute to the NAD(+) site. Residue arginine 305 is part of the active site. The active site involves glutamate 334. The active-site Proton donor is the histidine 352. 352–355 (HLGG) serves as a coordination point for NAD(+).

Belongs to the D-isomer specific 2-hydroxyacid dehydrogenase family.

Its pathway is secondary metabolite biosynthesis; terpenoid biosynthesis. In terms of biological role, dehydrogenase; part of the gene cluster that mediates the biosynthesis of enfumafungin, a glycosylated fernene-type triterpenoid with potent antifungal activity, mediated by its interaction with beta-1,3-glucan synthase and the fungal cell wall. The pathway begins with the terpene cyclase-glycosyl transferase fusion protein that most likely uses 2,3-oxidosqualene as substrate and catalyzes glycosylation immediately after cyclization. The fernene glycoside then could be processed by the desaturase efuI which catalyzes isomerization of a double bond established by efuA to form the core structure. The latter would then undergo a series of hydroxylations in unknown order at C-2, C-19, C-23 and C-25, which would be catalyzed by two of the three cytochrome P450 monooxygenases efuB, efuG or efuH. The hydroxy-group at C-25 becomes oxidized by the dehydrogenase efuE to enable a spontaneous, non-enzymatic hemiacetal formation with C-23. After hydroxylation at C-2, acetylation by the acetyltransferase efuC takes place. The final steps in enfumafungin biosynthesis require expansion of the 5-membered ring by lactonization via a Baeyer-Villiger reaction mediated by one of the BGC's cytochrome P450 monooxygenases (efuB, efuG or efuH) followed by ring cleavage. This type of reaction would establish a double bond between C-20 and C-21 which could be reduced by the reductase efuL to form the final product. The chain is Dehydrogenase efuE from Hormonema carpetanum.